We begin with the raw amino-acid sequence, 218 residues long: Ras-related protein Rab-4A (218 aa).

GTP is bound by residues Gly23, Thr24, Gly25, Lys26, Ser27, Cys28, Ser42, His44, and Thr45. Ser27 contributes to the Mg(2+) binding site. The short motif at 44-49 is the Switch 1 element; the sequence is HTIGVE. 2 residues coordinate Mg(2+): Thr45 and Asp68. The short motif at 70 to 79 is the Switch 2 element; the sequence is AGQERFRSVT. Gly71 is a binding site for GTP. Position 72 is a 5-glutamyl serotonin (Gln72). GTP-binding residues include Asn126, Lys127, Asp129, Ala157, and Leu158. Ser190 is subject to Phosphoserine. Residue Ser204 is modified to Phosphoserine; by CDK1. 2 S-geranylgeranyl cysteine lipidation sites follow: Cys216 and Cys218. Cys218 carries the post-translational modification Cysteine methyl ester.

This sequence belongs to the small GTPase superfamily. Rab family. In terms of assembly, interacts with RAB11FIP1, RABEP1, ZFYVE20 and RUFY1. Interacts with SGSM1, SGSM2 and SGSM3. Interacts (membrane-bound form) with NDRG1; the interaction involves NDRG1 in vesicular recycling of E-cadherin. Interacts (in GTP-bound form) with GRIPAP1. Interacts with RABEP1 and RBSN. Does not interact with HPS4. Mg(2+) is required as a cofactor. In terms of processing, serotonylation of Gln-72 by TGM2 during activation and aggregation of platelets leads to constitutive activation of GTPase activity. Post-translationally, phosphorylated by CDK1 kinase during mitosis.

The protein resides in the membrane. It localises to the cytoplasm. Its subcellular location is the early endosome membrane. It is found in the recycling endosome membrane. The enzyme catalyses GTP + H2O = GDP + phosphate + H(+). Regulated by guanine nucleotide exchange factors (GEFs) which promote the exchange of bound GDP for free GTP. Regulated by GTPase activating proteins (GAPs) which increase the GTP hydrolysis activity. Inhibited by GDP dissociation inhibitors (GDIs). The small GTPases Rab are key regulators of intracellular membrane trafficking, from the formation of transport vesicles to their fusion with membranes. Rabs cycle between an inactive GDP-bound form and an active GTP-bound form that is able to recruit to membranes different sets of downstream effectors directly responsible for vesicle formation, movement, tethering and fusion. RAB4A is involved in protein transport. Also plays a role in vesicular traffic. Mediates VEGFR2 endosomal trafficking to enhance VEGFR2 signaling. Acts as a regulator of platelet alpha-granule release during activation and aggregation of platelets. In Bos taurus (Bovine), this protein is Ras-related protein Rab-4A (RAB4A).